We begin with the raw amino-acid sequence, 188 residues long: Elongation factor P (188 aa).

Belongs to the elongation factor P family.

It is found in the cytoplasm. The protein operates within protein biosynthesis; polypeptide chain elongation. Its function is as follows. Involved in peptide bond synthesis. Stimulates efficient translation and peptide-bond synthesis on native or reconstituted 70S ribosomes in vitro. Probably functions indirectly by altering the affinity of the ribosome for aminoacyl-tRNA, thus increasing their reactivity as acceptors for peptidyl transferase. This is Elongation factor P from Methylorubrum extorquens (strain CM4 / NCIMB 13688) (Methylobacterium extorquens).